A 537-amino-acid polypeptide reads, in one-letter code: CTP synthase (537 aa).

An amidoligase domain region spans residues 1–265 (MTKFIFVTGG…GKYLVKRLGL (265 aa)). Ser-13 provides a ligand contact to CTP. Ser-13 contributes to the UTP binding site. 14 to 19 (GLGKGI) serves as a coordination point for ATP. Tyr-54 contributes to the L-glutamine binding site. An ATP-binding site is contributed by Asp-71. Residues Asp-71 and Glu-139 each coordinate Mg(2+). CTP is bound by residues 146–148 (DIE), 186–191 (KTKPTQ), and Lys-222. Residues 186-191 (KTKPTQ) and Lys-222 each bind UTP. Residues 290 to 532 (EIAIVGKYVK…VKAAKEYKQE (243 aa)) form the Glutamine amidotransferase type-1 domain. Gly-351 is an L-glutamine binding site. Residue Cys-378 is the Nucleophile; for glutamine hydrolysis of the active site. L-glutamine contacts are provided by residues 379–382 (FGFQ), Glu-402, and Arg-459. Residues His-505 and Glu-507 contribute to the active site.

It belongs to the CTP synthase family. In terms of assembly, homotetramer.

The catalysed reaction is UTP + L-glutamine + ATP + H2O = CTP + L-glutamate + ADP + phosphate + 2 H(+). The enzyme catalyses L-glutamine + H2O = L-glutamate + NH4(+). It carries out the reaction UTP + NH4(+) + ATP = CTP + ADP + phosphate + 2 H(+). It functions in the pathway pyrimidine metabolism; CTP biosynthesis via de novo pathway; CTP from UDP: step 2/2. Its activity is regulated as follows. Allosterically activated by GTP, when glutamine is the substrate; GTP has no effect on the reaction when ammonia is the substrate. The allosteric effector GTP functions by stabilizing the protein conformation that binds the tetrahedral intermediate(s) formed during glutamine hydrolysis. Inhibited by the product CTP, via allosteric rather than competitive inhibition. Its function is as follows. Catalyzes the ATP-dependent amination of UTP to CTP with either L-glutamine or ammonia as the source of nitrogen. Regulates intracellular CTP levels through interactions with the four ribonucleotide triphosphates. This chain is CTP synthase, found in Pyrococcus abyssi (strain GE5 / Orsay).